The primary structure comprises 146 residues: Hemoglobin subunit beta (146 aa).

V1 is subject to N-acetylvaline. Residues H2 to H146 enclose the Globin domain. S44 carries the post-translational modification Phosphoserine. K59 bears the N6-acetyllysine mark. H63 serves as a coordination point for heme b. At K82 the chain carries N6-acetyllysine. H92 is a heme b binding site. S-nitrosocysteine is present on C93. At K144 the chain carries N6-acetyllysine.

The protein belongs to the globin family. In terms of assembly, heterotetramer of two alpha chains and two beta chains. In terms of tissue distribution, red blood cells.

Involved in oxygen transport from the lung to the various peripheral tissues. This Canis latrans (Coyote) protein is Hemoglobin subunit beta (HBB).